The primary structure comprises 592 residues: Salivary peroxidase/catechol oxidase (592 aa).

The signal sequence occupies residues 1-21 (MWMFLKLLLFVCSSWWSCAQA). A disulfide bridge connects residues Cys24 and Cys37. Asn25 carries N-linked (GlcNAc...) asparagine glycosylation. Catalysis depends on His110, which acts as the Proton acceptor. Asp111, Thr187, Phe189, Asp191, and Ser193 together coordinate Ca(2+). Asn230 carries N-linked (GlcNAc...) asparagine glycosylation. Residues Cys235 and Cys244 are joined by a disulfide bond. Residue His353 coordinates heme b. The N-linked (GlcNAc...) asparagine glycan is linked to Asn366. 2 disulfides stabilise this stretch: Cys452-Cys509 and Cys553-Cys580.

The protein belongs to the peroxidase family. XPO subfamily. As to expression, female salivary gland.

It is found in the secreted. The catalysed reaction is 2 catechol + O2 = 2 1,2-benzoquinone + 2 H2O. Inhibits noradrenaline-induced smooth muscle contraction in the host, probably due to the oxidation of noradrenaline, resulting in vasodilation. Exhibits peroxidase activity. The protein is Salivary peroxidase/catechol oxidase of Anopheles albimanus (New world malaria mosquito).